Consider the following 138-residue polypeptide: Ribulose bisphosphate carboxylase small subunit (138 aa).

Belongs to the RuBisCO small chain family. Heterohexadecamer of 8 large and 8 small subunits.

The protein localises to the plastid. It localises to the chloroplast. In terms of biological role, ruBisCO catalyzes two reactions: the carboxylation of D-ribulose 1,5-bisphosphate, the primary event in carbon dioxide fixation, as well as the oxidative fragmentation of the pentose substrate in the photorespiration process. Both reactions occur simultaneously and in competition at the same active site. Although the small subunit is not catalytic it is essential for maximal activity. This Pyropia katadae (Red alga) protein is Ribulose bisphosphate carboxylase small subunit.